A 512-amino-acid chain; its full sequence is MASAVWGNAPWWSPPPPAPARPLTDIDFCSGAQLQELTQLIQELGVQESWNDGPKPGPDLLQAKDFVFSLLSLIHRRDPRFPPQTELLLLRGGIREGSLDLGPAPLGPYTRGPHYDAGFTLLVPVFSLDGTGQELQLDMRSCYAWLCLPEQVRGTSVREAWQDCLGPPVPGGRDWIHPTDSREGPRDPQSSVDQPHSDIIEPEAHESLEKSPSNVSVPESPQQNLTDIGFPSLSEETNDDVTKAADVSPGPQPSEAREAWPTLCPAQVAAWFFASLAAVAESLFPVPGAPRLVHAARHAGFTTILLATPGPPRRLLLFDLIPVVSVAGWPQGARSHSWAGPLASESSSFYLVPGGGGQTERPGASGWQLCFARQELALKARIPTPLLQAHAAAQALLRPLVAGTRAAAPYLLRTLLYWACERLPALYLARPENAGACCLGLLDELGRVLEARTLPHYFLSGQKLRAGDGASSLLGALALLRGDPARALRAAVEEAKAARKGGGLAGVGAGSH.

The Extracellular portion of the chain corresponds to 1–267 (MASAVWGNAP…EAWPTLCPAQ (267 aa)). The disordered stretch occupies residues 168 to 258 (PVPGGRDWIH…PGPQPSEARE (91 aa)). Basic and acidic residues-rich tracts occupy residues 174 to 186 (DWIH…EGPR) and 195 to 209 (PHSD…ESLE). The span at 210–226 (KSPSNVSVPESPQQNLT) shows a compositional bias: polar residues. Residues 268-284 (VAAWFFASLAAVAESLF) traverse the membrane as a helical segment. The Cytoplasmic portion of the chain corresponds to 285–512 (PVPGAPRLVH…GLAGVGAGSH (228 aa)).

As to quaternary structure, interacts with CSF2RB; this interaction occurs preferentially in the absence of CSF2.

It is found in the cell membrane. In terms of biological role, selectively involved in CSF2 deprivation-induced apoptosis via a mitochondria-dependent pathway. The polypeptide is Transmembrane protein 102 (TMEM102) (Bos taurus (Bovine)).